We begin with the raw amino-acid sequence, 237 residues long: Cuticlin-like protein 19 (237 aa).

The first 20 residues, 1 to 20, serve as a signal peptide directing secretion; it reads MVEYNRIFCVLVIFSTTIKC.

Interacts with vps-51 and vps-52. Expression detected in motor neurons.

The protein resides in the golgi apparatus. Its subcellular location is the trans-Golgi network. The polypeptide is Cuticlin-like protein 19 (cutl-19) (Caenorhabditis elegans).